The following is a 291-amino-acid chain: Neugrin (291 aa).

An N-terminal signal peptide occupies residues 1–15 (MAVTLSLLLGGRVCA). Disordered regions lie at residues 26-48 (GVAG…PEER) and 155-270 (GSGN…DNFS). A Phosphoserine modification is found at S41. N-linked (GlcNAc...) asparagine glycans are attached at residues N158 and N186. Over residues 236–246 (KYSSDSESPRG) the composition is skewed to polar residues. N-linked (GlcNAc...) asparagine glycosylation is present at N268.

The protein belongs to the neugrin family. In terms of assembly, forms a regulatory protein-RNA complex, consisting of RCC1L, NGRN, RPUSD3, RPUSD4, TRUB2, FASTKD2 and 16S mt-rRNA. Interacts with 16S mt-rRNA; this interaction is direct. Expressed at high levels in heart, brain and skeletal muscle. In brain, mainly expressed in neurons rather than glial cells.

It is found in the nucleus. The protein resides in the secreted. The protein localises to the mitochondrion membrane. Its function is as follows. Plays an essential role in mitochondrial ribosome biogenesis. As a component of a functional protein-RNA module, consisting of RCC1L, NGRN, RPUSD3, RPUSD4, TRUB2, FASTKD2 and 16S mitochondrial ribosomal RNA (16S mt-rRNA), controls 16S mt-rRNA abundance and is required for intra-mitochondrial translation of core subunits of the oxidative phosphorylation system. In Homo sapiens (Human), this protein is Neugrin.